A 131-amino-acid chain; its full sequence is Large ribosomal subunit protein bL12 (131 aa).

It belongs to the bacterial ribosomal protein bL12 family. As to quaternary structure, homodimer. Part of the ribosomal stalk of the 50S ribosomal subunit. Forms a multimeric L10(L12)X complex, where L10 forms an elongated spine to which 2 to 4 L12 dimers bind in a sequential fashion. Binds GTP-bound translation factors.

Functionally, forms part of the ribosomal stalk which helps the ribosome interact with GTP-bound translation factors. Is thus essential for accurate translation. The sequence is that of Large ribosomal subunit protein bL12 from Prochlorococcus marinus (strain MIT 9215).